Here is a 536-residue protein sequence, read N- to C-terminus: Glutamyl-tRNA(Gln) amidotransferase subunit B, mitochondrial (536 aa).

Belongs to the GatB/GatE family. GatB subfamily. Subunit of the heterotrimeric GatFAB amidotransferase (AdT) complex, composed of A, B and F subunits.

Its subcellular location is the mitochondrion. It carries out the reaction L-glutamyl-tRNA(Gln) + L-glutamine + ATP + H2O = L-glutaminyl-tRNA(Gln) + L-glutamate + ADP + phosphate + H(+). In terms of biological role, allows the formation of correctly charged Gln-tRNA(Gln) through the transamidation of misacylated Glu-tRNA(Gln) in the mitochondria. The reaction takes place in the presence of glutamine and ATP through an activated gamma-phospho-Glu-tRNA(Gln). The chain is Glutamyl-tRNA(Gln) amidotransferase subunit B, mitochondrial from Vanderwaltozyma polyspora (strain ATCC 22028 / DSM 70294 / BCRC 21397 / CBS 2163 / NBRC 10782 / NRRL Y-8283 / UCD 57-17) (Kluyveromyces polysporus).